The primary structure comprises 355 residues: Ion-translocating oxidoreductase complex subunit D (355 aa).

4 helical membrane-spanning segments follow: residues 23-43, 44-64, 78-109, and 129-149; these read WVAL…GWGT, LVQL…VMLF, ALVT…IVIA, and VVLL…LPLI. An FMN phosphoryl threonine modification is found at T194. A run of 5 helical transmembrane segments spans residues 221-241, 250-270, 273-293, 307-327, and 328-348; these read FAGV…LILL, IPVG…LFFP, TASP…FFIA, ILFG…GGFP, and DGVA…DYYT.

Belongs to the NqrB/RnfD family. As to quaternary structure, the complex is composed of six subunits: RnfA, RnfB, RnfC, RnfD, RnfE and RnfG. FMN is required as a cofactor.

It is found in the cell inner membrane. Functionally, part of a membrane-bound complex that couples electron transfer with translocation of ions across the membrane. The chain is Ion-translocating oxidoreductase complex subunit D from Vibrio vulnificus (strain CMCP6).